Reading from the N-terminus, the 303-residue chain is Hemolysin C (303 aa).

CBS domains are found at residues 81 to 143 (MVPR…NSPL) and 146 to 203 (LIRK…IDDE).

Belongs to the UPF0053 family. Hemolysin C subfamily.

The chain is Hemolysin C (tlyC) from Rickettsia prowazekii (strain Madrid E).